The primary structure comprises 413 residues: Arginine biosynthesis bifunctional protein ArgJ (413 aa).

6 residues coordinate substrate: T160, K186, T197, E284, N408, and S413. Residue T197 is the Nucleophile of the active site.

The protein belongs to the ArgJ family. In terms of assembly, heterotetramer of two alpha and two beta chains.

The protein resides in the cytoplasm. The enzyme catalyses N(2)-acetyl-L-ornithine + L-glutamate = N-acetyl-L-glutamate + L-ornithine. It catalyses the reaction L-glutamate + acetyl-CoA = N-acetyl-L-glutamate + CoA + H(+). The protein operates within amino-acid biosynthesis; L-arginine biosynthesis; L-ornithine and N-acetyl-L-glutamate from L-glutamate and N(2)-acetyl-L-ornithine (cyclic): step 1/1. It functions in the pathway amino-acid biosynthesis; L-arginine biosynthesis; N(2)-acetyl-L-ornithine from L-glutamate: step 1/4. Its function is as follows. Catalyzes two activities which are involved in the cyclic version of arginine biosynthesis: the synthesis of N-acetylglutamate from glutamate and acetyl-CoA as the acetyl donor, and of ornithine by transacetylation between N(2)-acetylornithine and glutamate. This is Arginine biosynthesis bifunctional protein ArgJ from Burkholderia pseudomallei (strain 1710b).